The primary structure comprises 513 residues: Mannan endo-1,4-beta-mannosidase A and B (513 aa).

The signal sequence occupies residues 1–26 (MKVYKKVAFVMAFIMFFSVLPTISMS). Residues 41-353 (QTTKNVYSWL…FNDSWVVNRG (313 aa)) enclose the GH26 domain. His-132 contacts substrate. Residue Glu-195 is the Proton donor of the active site. Substrate-binding residues include Trp-200 and Tyr-270. Residue Glu-295 is the Nucleophile of the active site. A substrate-binding site is contributed by 429–430 (IK).

This sequence belongs to the glycosyl hydrolase 26 family.

Its subcellular location is the secreted. The enzyme catalyses Random hydrolysis of (1-&gt;4)-beta-D-mannosidic linkages in mannans, galactomannans and glucomannans.. Functionally, could be involved in the degradation of glucomannan and catalyzes the endo hydrolysis of beta-1,4-linked mannan, galactomannan and glucomannan. The sequence is that of Mannan endo-1,4-beta-mannosidase A and B from Caldalkalibacillus mannanilyticus (strain DSM 16130 / CIP 109019 / JCM 10596 / AM-001) (Bacillus mannanilyticus).